The following is a 316-amino-acid chain: Large ribosomal subunit protein uL10 (316 aa).

Positions 282–316 (ASAAKADEPKKEEAKKVEEEEEEEEDGFMGFGMFD) are disordered. Over residues 286-299 (KADEPKKEEAKKVE) the composition is skewed to basic and acidic residues.

Belongs to the universal ribosomal protein uL10 family. P0 forms a pentameric complex by interaction with dimers of P1 and P2. Post-translationally, phosphorylated.

Its function is as follows. Ribosomal protein P0 is the functional equivalent of E.coli protein L10. This is Large ribosomal subunit protein uL10 (RPLP0) from Plasmodium falciparum (isolate 7G8).